A 229-amino-acid polypeptide reads, in one-letter code: Small ribosomal subunit protein uS3 (229 aa).

The KH type-2 domain maps to 39 to 107 (VRQFLIKELK…PAQINISEVR (69 aa)).

This sequence belongs to the universal ribosomal protein uS3 family. In terms of assembly, part of the 30S ribosomal subunit. Forms a tight complex with proteins S10 and S14.

Its function is as follows. Binds the lower part of the 30S subunit head. Binds mRNA in the 70S ribosome, positioning it for translation. In Photobacterium profundum (strain SS9), this protein is Small ribosomal subunit protein uS3.